A 518-amino-acid chain; its full sequence is UPF0053 inner membrane protein YoaE (518 aa).

Over 1–13 (MEFLMDPSIWAGL) the chain is Cytoplasmic. Residues 14–34 (LTLVVLEIVLGIDNLVFIAIL) form a helical membrane-spanning segment. Residues 35 to 48 (ADKLPPKQRDKARL) lie on the Periplasmic side of the membrane. Residues 49–69 (LGLSLALIMRLGLLSLISWMV) form a helical membrane-spanning segment. The Cytoplasmic portion of the chain corresponds to 70–78 (TLTKPLFTV). A helical transmembrane segment spans residues 79 to 99 (MDFSFSGRDLIMLFGGIFLLF). The Periplasmic segment spans residues 100 to 124 (KATTELHERLENRDHDSGHGKGYAS). The chain crosses the membrane as a helical span at residues 125–145 (FWVVVTQIVILDAVFSLDAVI). At 146-149 (TAVG) the chain is on the cytoplasmic side. The chain crosses the membrane as a helical span at residues 150–170 (MVNHLPVMMAAVVIAMAVMLL). The Periplasmic portion of the chain corresponds to 171–184 (ASKPLTRFVNQHPT). Residues 185–205 (VVVLCLSFLLMIGLSLVAEGF) traverse the membrane as a helical segment. Residue G206 is a topological domain, cytoplasmic. The helical transmembrane segment at 207–227 (FHIPKGYLYAAIGFSIIIEVF) threads the bilayer. Residues 228-354 (NQIARRNFIR…IGIVRAKELL (127 aa)) lie on the Periplasmic side of the membrane. CBS domains are found at residues 304–363 (MTPR…GVDV) and 367–427 (ASAS…DADE). Residues 355 to 375 (VALEEGVDVAAIASASPAIIV) form a helical membrane-spanning segment. Residues 376–518 (PETLDPINLL…KEQPAHDEDE (143 aa)) lie on the Cytoplasmic side of the membrane.

This sequence belongs to the UPF0053 family.

The protein localises to the cell inner membrane. The protein is UPF0053 inner membrane protein YoaE (yoaE) of Escherichia coli O157:H7.